A 90-amino-acid chain; its full sequence is Small cell adhesion glycoprotein homolog (90 aa).

Over 1–27 (MSILPTTDSVPEEAITKASGDVDGFEK) the chain is Extracellular. A helical; Signal-anchor for type III membrane protein transmembrane segment spans residues 28–48 (AVVGGVIAAVFITLITVVVLI). Topologically, residues 49 to 90 (TVYLYKHKGSYRTNENLEDVEASKTLQMEDSALTPEKKEYFM) are cytoplasmic.

This sequence belongs to the SMAGP family.

It localises to the cell membrane. The protein localises to the cytoplasmic vesicle membrane. Functionally, may play a role in epithelial cell-cell contacts. The sequence is that of Small cell adhesion glycoprotein homolog (smagp) from Xenopus tropicalis (Western clawed frog).